Here is a 450-residue protein sequence, read N- to C-terminus: F-box protein KIB3 (450 aa).

The region spanning 20–50 (DLVRLILERLSFVDFHRARCVSSTWYVASKS) is the F-box domain.

The protein localises to the cytoplasm. The protein resides in the nucleus. It is found in the nucleolus. Component of SCF(ASK-cullin-F-box) E3 ubiquitin ligase complexes, which may mediate the ubiquitination and subsequent proteasomal degradation of target proteins. Required for brassinosteroid (BR) signal transduction. Mediates ASK7/BIN2/SK21 inactivation both by competing with substrate binding (e.g. BZR1) and by promoting its ubiquitination and subsequent proteasomal degradation. This is F-box protein KIB3 from Arabidopsis thaliana (Mouse-ear cress).